The following is a 357-amino-acid chain: tRNA N6-adenosine threonylcarbamoyltransferase (357 aa).

His-119 and His-123 together coordinate Fe cation. Substrate contacts are provided by residues 141-145 (LISGG), Asp-174, Gly-187, and Asn-284. Asp-312 contributes to the Fe cation binding site.

It belongs to the KAE1 / TsaD family. The cofactor is Fe(2+).

It is found in the cytoplasm. The enzyme catalyses L-threonylcarbamoyladenylate + adenosine(37) in tRNA = N(6)-L-threonylcarbamoyladenosine(37) in tRNA + AMP + H(+). In terms of biological role, required for the formation of a threonylcarbamoyl group on adenosine at position 37 (t(6)A37) in tRNAs that read codons beginning with adenine. Is involved in the transfer of the threonylcarbamoyl moiety of threonylcarbamoyl-AMP (TC-AMP) to the N6 group of A37, together with TsaE and TsaB. TsaD likely plays a direct catalytic role in this reaction. The protein is tRNA N6-adenosine threonylcarbamoyltransferase of Pelagibacter ubique (strain HTCC1062).